Reading from the N-terminus, the 643-residue chain is MWKFNKKLARLTYRLYSSSGPSSPLHGKKKLPQNLKFVVLNPTQSGLVKNDQKQPRHRPSKKRSHKETGDNNLDFGSKLLVFEKQNSLDSALNSIRLKKPTSASLPSLEYNALLQSLTSSYNRYQLREFISTHQPDSSSHLTHWKKSKLSQYIIEKIWNCQPISTPTTPTGIKSTSLTFQFDSPREIFLLLITQNGKILTNFNKLGLTFIISIQDNELTVKGSPSLLKYAEISLNKIWSNITHENVRMYSLMPSKDVINLIQKETHTFFEYLPDLQMYKISALSTKKISMAKVFLLNAVASNPNTTQHHHTIASPALKTELYPFNNTLENLDWLNKSQDWARLQSVVPKNCTDLMTPTENATPELTDAQVSQFESSLSKNIPSLSPSDSISQSLSITLGHSLQSASFSSIFQPLIHKSFISKLLNLPMYKESSSSAVPVPVPLDQHLITNAHQSFIQLNFTPVPPTSGSSSSPFLQIWFEIDEFDNIVTTSMRPLLKLQENSVILRTPQCQTDYKITSDYIQDLLPDFDQTNPDAWLSEQKGLQEFLLKSHWKLNKYQNLMKKINISLPDNLIQQYQLTDVLTHRVLNLRFPTNTAQDDKYIIQYSDISRGFLNNGSYRQLDFINVNPSETSLKTFINDVLSF.

The interval 43–72 is disordered; sequence TQSGLVKNDQKQPRHRPSKKRSHKETGDNN. The span at 55 to 65 shows a compositional bias: basic residues; that stretch reads PRHRPSKKRSH.

The protein belongs to the SLS1 family.

The protein localises to the mitochondrion inner membrane. Involved in aerobic respiration where it is required for assembly of respiratory chain enzyme complexes III and IV. Also has a role in mitochondrial gene expression. May be part of a mitochondrial membrane-associated RNA-shuttling system, delivering NAM1-associated transcripts to the translation machinery. The protein is Sigma-like sequence protein 1, mitochondrial (SLS1) of Saccharomyces cerevisiae (strain ATCC 204508 / S288c) (Baker's yeast).